The primary structure comprises 488 residues: Glutamyl-tRNA(Gln) amidotransferase subunit A (488 aa).

Residues K77 and S152 each act as charge relay system in the active site. S176 (acyl-ester intermediate) is an active-site residue.

The protein belongs to the amidase family. GatA subfamily. As to quaternary structure, heterotrimer of A, B and C subunits.

The enzyme catalyses L-glutamyl-tRNA(Gln) + L-glutamine + ATP + H2O = L-glutaminyl-tRNA(Gln) + L-glutamate + ADP + phosphate + H(+). Allows the formation of correctly charged Gln-tRNA(Gln) through the transamidation of misacylated Glu-tRNA(Gln) in organisms which lack glutaminyl-tRNA synthetase. The reaction takes place in the presence of glutamine and ATP through an activated gamma-phospho-Glu-tRNA(Gln). This is Glutamyl-tRNA(Gln) amidotransferase subunit A from Streptococcus pyogenes serotype M2 (strain MGAS10270).